Consider the following 757-residue polypeptide: Exo-alpha-(1-&gt;6)-L-arabinopyranosidase (757 aa).

Asp232 is a catalytic residue.

This sequence belongs to the glycosyl hydrolase 3 family. In terms of assembly, homotetramer.

Its activity is regulated as follows. Completely inhibited by Cu(2+) and activated by Co(2+). In terms of biological role, catalyzes the hydrolysis of a non-reducing terminal alpha-L-arabinopyranosidic linkage in ginsenoside Rb2 (alpha-L-arabinopyranosyl-(1-&gt;6)-alpha-D-glucopyranosyl) to release alpha-D-glucopyranosyl (Rd). It is not able to hydrolyze alpha-L-arabinofuranosyl-(1-&gt;6)-alpha-D-glucopyranosyl (Rc). This Bifidobacterium longum protein is Exo-alpha-(1-&gt;6)-L-arabinopyranosidase (apy).